We begin with the raw amino-acid sequence, 297 residues long: Homoserine kinase (297 aa).

Pro82 to Ser92 is an ATP binding site.

It belongs to the GHMP kinase family. Homoserine kinase subfamily.

It is found in the cytoplasm. The enzyme catalyses L-homoserine + ATP = O-phospho-L-homoserine + ADP + H(+). Its pathway is amino-acid biosynthesis; L-threonine biosynthesis; L-threonine from L-aspartate: step 4/5. Catalyzes the ATP-dependent phosphorylation of L-homoserine to L-homoserine phosphate. The polypeptide is Homoserine kinase (Bacillus anthracis (strain CDC 684 / NRRL 3495)).